Reading from the N-terminus, the 113-residue chain is Nucleoid-associated protein Cthe_2143 (113 aa).

Belongs to the YbaB/EbfC family. In terms of assembly, homodimer.

The protein resides in the cytoplasm. It is found in the nucleoid. Functionally, binds to DNA and alters its conformation. May be involved in regulation of gene expression, nucleoid organization and DNA protection. The chain is Nucleoid-associated protein Cthe_2143 from Acetivibrio thermocellus (strain ATCC 27405 / DSM 1237 / JCM 9322 / NBRC 103400 / NCIMB 10682 / NRRL B-4536 / VPI 7372) (Clostridium thermocellum).